The chain runs to 150 residues: Large ribosomal subunit protein uL11 (150 aa).

The disordered stretch occupies residues 83-111 (AAGLKPQGKRNRAKGSEKPGRQTAGTVTA).

This sequence belongs to the universal ribosomal protein uL11 family. As to quaternary structure, part of the ribosomal stalk of the 50S ribosomal subunit. Interacts with L10 and the large rRNA to form the base of the stalk. L10 forms an elongated spine to which L12 dimers bind in a sequential fashion forming a multimeric L10(L12)X complex. One or more lysine residues are methylated.

Forms part of the ribosomal stalk which helps the ribosome interact with GTP-bound translation factors. The polypeptide is Large ribosomal subunit protein uL11 (Paracoccus denitrificans (strain Pd 1222)).